The sequence spans 130 residues: LTSLILLVAVQAITEEDLELLRQTSAECKTESGVSEDVIKRARKGDLEDDPKLKMQLLCIFKALEIVAESGEIEADTFKEKLTRVTNDDEESEKIVEKCTVTEDTPEDTAFEVTKCVLKDKPNFFGDLFV.

Positions 1-12 (LTSLILLVAVQA) are cleaved as a signal peptide. 2 cysteine pairs are disulfide-bonded: Cys-28–Cys-59 and Cys-99–Cys-116.

This sequence belongs to the PBP/GOBP family. N-glycosylated. In terms of tissue distribution, tubular accessory sex gland.

It localises to the secreted. In terms of biological role, may be a carrier protein for lipids. The chain is B1 protein from Tenebrio molitor (Yellow mealworm beetle).